The chain runs to 498 residues: Inosine-5'-monophosphate dehydrogenase (498 aa).

CBS domains follow at residues 98–155 and 159–216; these read MVVN…EQKI and MTRE…PHAS. NAD(+) contacts are provided by residues Asp-253 and 303-305; that span reads GIG. Positions 305 and 307 each coordinate K(+). Ser-308 contacts IMP. Cys-310 contacts K(+). The Thioimidate intermediate role is filled by Cys-310. Residues 343 to 345, 366 to 367, and 390 to 394 each bind IMP; these read DGG, GS, and YRGMG. Arg-406 acts as the Proton acceptor in catalysis. An IMP-binding site is contributed by Glu-421. K(+)-binding residues include Glu-475, Ser-476, and His-477.

It belongs to the IMPDH/GMPR family. As to quaternary structure, homotetramer. It depends on K(+) as a cofactor.

It catalyses the reaction IMP + NAD(+) + H2O = XMP + NADH + H(+). It participates in purine metabolism; XMP biosynthesis via de novo pathway; XMP from IMP: step 1/1. With respect to regulation, mycophenolic acid (MPA) is a non-competitive inhibitor that prevents formation of the closed enzyme conformation by binding to the same site as the amobile flap. In contrast, mizoribine monophosphate (MZP) is a competitive inhibitor that induces the closed conformation. MPA is a potent inhibitor of mammalian IMPDHs but a poor inhibitor of the bacterial enzymes. MZP is a more potent inhibitor of bacterial IMPDH. Its function is as follows. Catalyzes the conversion of inosine 5'-phosphate (IMP) to xanthosine 5'-phosphate (XMP), the first committed and rate-limiting step in the de novo synthesis of guanine nucleotides, and therefore plays an important role in the regulation of cell growth. The polypeptide is Inosine-5'-monophosphate dehydrogenase (Rhizobium tropici).